Consider the following 94-residue polypeptide: Pyrimidine/purine nucleoside phosphorylase (94 aa).

Belongs to the nucleoside phosphorylase PpnP family.

It catalyses the reaction a purine D-ribonucleoside + phosphate = a purine nucleobase + alpha-D-ribose 1-phosphate. The catalysed reaction is adenosine + phosphate = alpha-D-ribose 1-phosphate + adenine. The enzyme catalyses cytidine + phosphate = cytosine + alpha-D-ribose 1-phosphate. It carries out the reaction guanosine + phosphate = alpha-D-ribose 1-phosphate + guanine. It catalyses the reaction inosine + phosphate = alpha-D-ribose 1-phosphate + hypoxanthine. The catalysed reaction is thymidine + phosphate = 2-deoxy-alpha-D-ribose 1-phosphate + thymine. The enzyme catalyses uridine + phosphate = alpha-D-ribose 1-phosphate + uracil. It carries out the reaction xanthosine + phosphate = alpha-D-ribose 1-phosphate + xanthine. Catalyzes the phosphorolysis of diverse nucleosides, yielding D-ribose 1-phosphate and the respective free bases. Can use uridine, adenosine, guanosine, cytidine, thymidine, inosine and xanthosine as substrates. Also catalyzes the reverse reactions. This Pectobacterium atrosepticum (strain SCRI 1043 / ATCC BAA-672) (Erwinia carotovora subsp. atroseptica) protein is Pyrimidine/purine nucleoside phosphorylase.